Reading from the N-terminus, the 299-residue chain is Taste receptor type 2 member 4 (299 aa).

Residues 1 to 9 (MLQLFYFSA) are Extracellular-facing. Residues 10-30 (IIASVILNFVGIIMNLFIMVV) form a helical membrane-spanning segment. Over 31–46 (NCKTWVKSHRISSSDR) the chain is Cytoplasmic. The chain crosses the membrane as a helical span at residues 47–67 (ILFSLGITRFLMLGLFLVNTI). The Extracellular segment spans residues 68 to 81 (FFVSSNTERSVYLS). A helical membrane pass occupies residues 82–102 (AFFVLCFMFXDSSSLWFVTLL). Residues 103–131 (NILYCVKITNFQHSVFLLLKQNISPKIPR) lie on the Cytoplasmic side of the membrane. A helical membrane pass occupies residues 132 to 152 (LLLACVLISAFTTCLYITLSQ). At 153 to 172 (ASPFPELVTKRNNTSFNTHE) the chain is on the extracellular side. Residues Asn164 and Asn165 are each glycosylated (N-linked (GlcNAc...) asparagine). Residues 173 to 193 (GILSLVVSLVLSSSLQFIINV) traverse the membrane as a helical segment. Residues 194–230 (TSASLLIHSLRRHIQKMQKNATGFWNPQTEAHVGAMK) are Cytoplasmic-facing. The chain crosses the membrane as a helical span at residues 231 to 251 (LMIYFLILYIPYSVATLVQYL). The Extracellular portion of the chain corresponds to 252 to 262 (PFYVGMDMGTK). The chain crosses the membrane as a helical span at residues 263–283 (AICLIFATLYSPGHSVLIIIT). Residues 284–299 (HPKLKTTAKKILCFKK) are Cytoplasmic-facing.

Belongs to the G-protein coupled receptor T2R family.

The protein localises to the membrane. The protein resides in the cell projection. It is found in the cilium membrane. Functionally, gustducin-coupled receptor implicated in the perception of bitter compounds in the oral cavity and the gastrointestinal tract. Signals through PLCB2 and the calcium-regulated cation channel TRPM5. In airway epithelial cells, binding of denatonium increases the intracellular calcium ion concentration and stimulates ciliary beat frequency. This chain is Taste receptor type 2 member 4 (TAS2R4), found in Pongo pygmaeus (Bornean orangutan).